The primary structure comprises 359 residues: Serine/threonine-protein phosphatase 2A activator 2 (359 aa).

The protein belongs to the PTPA-type PPIase family.

The protein resides in the cytoplasm. It carries out the reaction [protein]-peptidylproline (omega=180) = [protein]-peptidylproline (omega=0). Functionally, PPIases accelerate the folding of proteins. It catalyzes the cis-trans isomerization of proline imidic peptide bonds in oligopeptides. Acts as a regulatory subunit for PP2A-like phosphatases modulating their activity or substrate specificity, probably by inducing a conformational change in the catalytic subunit, a direct target of the PPIase. Can reactivate inactive phosphatase PP2A-phosphatase methylesterase complexes (PP2Ai) in presence of ATP and Mg(2+) by dissociating the inactive form from the complex. The sequence is that of Serine/threonine-protein phosphatase 2A activator 2 (RRD2) from Eremothecium gossypii (strain ATCC 10895 / CBS 109.51 / FGSC 9923 / NRRL Y-1056) (Yeast).